Here is a 624-residue protein sequence, read N- to C-terminus: Kelch-like protein diablo (624 aa).

Residues 1 to 55 form a disordered region; it reads MGDPLLPGSTGLGSGSATAATGGSVTAGSGLGNGGTGGAERPPSPARLTHTSEKH. The span at 15–28 shows a compositional bias: low complexity; it reads GSATAATGGSVTAG. The span at 29-38 shows a compositional bias: gly residues; sequence SGLGNGGTGG. A BTB domain is found at 73-140; the sequence is CDVVLNVGGR…CYTAHIIVEE (68 aa). The BACK domain maps to 175-277; it reads CLGIRAFADT…SPKFLVGTVG (103 aa). Kelch repeat units lie at residues 324-370, 372-418, 419-465, 467-512, 514-559, and 560-606; these read VLFA…VLND, LYAV…VLDG, FLYA…VLSG, LYAI…VFNN, IYAV…VVNG, and QLYA…VMRA.

Its pathway is protein modification; protein ubiquitination. Probable substrate-specific adapter of an E3 ubiquitin-protein ligase complex which mediates the ubiquitination and subsequent proteasomal degradation of target proteins. May have a role in synapse differentiation and growth. The protein is Kelch-like protein diablo of Drosophila grimshawi (Hawaiian fruit fly).